The primary structure comprises 70 residues: SPbeta prophage-derived uncharacterized protein YotJ (70 aa).

This chain is SPbeta prophage-derived uncharacterized protein YotJ (yotJ), found in Bacillus subtilis (strain 168).